A 238-amino-acid chain; its full sequence is Alpha-tubulin N-acetyltransferase (238 aa).

Residues 1 to 196 enclose the N-acetyltransferase domain; sequence MEFDFDISQS…NNFVVFEDLF (196 aa). Residues 129–142 and 165–174 each bind acetyl-CoA; these read FYVH…GNGK and SFKFLSFLQK.

This sequence belongs to the acetyltransferase ATAT1 family.

The catalysed reaction is L-lysyl-[alpha-tubulin] + acetyl-CoA = N(6)-acetyl-L-lysyl-[alpha-tubulin] + CoA + H(+). Specifically acetylates 'Lys-40' in alpha-tubulin on the lumenal side of microtubules. Promotes microtubule destabilization and accelerates microtubule dynamics; this activity may be independent of acetylation activity. Acetylates alpha-tubulin with a slow enzymatic rate, due to a catalytic site that is not optimized for acetyl transfer. Enters the microtubule through each end and diffuses quickly throughout the lumen of microtubules. Acetylates only long/old microtubules because of its slow acetylation rate since it does not have time to act on dynamically unstable microtubules before the enzyme is released. This is Alpha-tubulin N-acetyltransferase from Trichoplax adhaerens (Trichoplax reptans).